Reading from the N-terminus, the 367-residue chain is tRNA-specific 2-thiouridylase MnmA (367 aa).

ATP is bound by residues 13-20 and Met-39; that span reads GLSGGVDS. The segment at 99-101 is interaction with target base in tRNA; that stretch reads NPD. Catalysis depends on Cys-104, which acts as the Nucleophile. An intrachain disulfide couples Cys-104 to Cys-200. Gly-128 contributes to the ATP binding site. The interval 150 to 152 is interaction with tRNA; that stretch reads KDQ. The active-site Cysteine persulfide intermediate is the Cys-200. Residues 307–308 form an interaction with tRNA region; it reads RY.

It belongs to the MnmA/TRMU family.

Its subcellular location is the cytoplasm. The enzyme catalyses S-sulfanyl-L-cysteinyl-[protein] + uridine(34) in tRNA + AH2 + ATP = 2-thiouridine(34) in tRNA + L-cysteinyl-[protein] + A + AMP + diphosphate + H(+). Its function is as follows. Catalyzes the 2-thiolation of uridine at the wobble position (U34) of tRNA, leading to the formation of s(2)U34. This chain is tRNA-specific 2-thiouridylase MnmA, found in Neisseria meningitidis serogroup A / serotype 4A (strain DSM 15465 / Z2491).